We begin with the raw amino-acid sequence, 202 residues long: Uclacyanin-2 (202 aa).

Residues 1-29 form the signal peptide; sequence MAMNGLSKMAVAAATALLLVLTIVPGAVA. In terms of domain architecture, Phytocyanin spans 30-126; that stretch reads VTYTIEWTTG…GMKLAVNVVA (97 aa). Cu cation is bound at residue H65. N86 carries an N-linked (GlcNAc...) asparagine glycan. 3 residues coordinate Cu cation: C106, H111, and M118. The interval 129-181 is disordered; the sequence is AGPPATPTPPSSTPGTPTTPESPPSGGSPTPTTPTPGAGSTSPPPPPKASGAS. Residues 141–169 show a composition bias toward low complexity; that stretch reads TPGTPTTPESPPSGGSPTPTTPTPGAGST. A lipid anchor (GPI-anchor amidated serine) is attached at S178. A propeptide spans 179-202 (removed in mature form); the sequence is GASKGVMSYVLVGVSMVLGYGLWM.

Its subcellular location is the cell membrane. Probably acts as an electron carrier involved in oxygen activation and/or lignin formation. The sequence is that of Uclacyanin-2 from Arabidopsis thaliana (Mouse-ear cress).